The chain runs to 3122 residues: Large tegument protein deneddylase (3122 aa).

Residues 1–248 (MIPAALPHPT…SETYLQDEPF (248 aa)) are deubiquitination activity. Positions 20–238 (VVTGVRNQFA…TAAALHLYGA (219 aa)) constitute a Peptidase C76 domain. Catalysis depends on residues C40, D172, and H174. 2 disordered regions span residues 281 to 367 (GSGP…GDAA) and 387 to 496 (RARY…PPGA). Residues 343-353 (SAPDAAASGPP) are compositionally biased toward low complexity. 2 stretches are compositionally biased toward basic residues: residues 387–400 (RARY…RRRP) and 425–436 (KAKKKSAPKKKA). The span at 437 to 454 (PVAAEVPASSPTPIAATV) shows a compositional bias: low complexity. Positions 548–578 (LELCVIFFFERVLAFLIENGARTHTQAGVAG) are interaction with inner tegument protein. Disordered regions lie at residues 2494–2539 (YQRP…ADPG), 2570–2974 (ASDD…THLP), and 3006–3059 (SDDE…SQFG). 2 stretches are compositionally biased toward pro residues: residues 2578–2590 (TPNP…PPPA) and 2637–2654 (PSPP…PPPA). Positions 2655 to 2667 (FSGSAAAFSAAVP) are enriched in low complexity. The span at 2668–2681 (RVRRSRRTRAKSRA) shows a compositional bias: basic residues. Composition is skewed to pro residues over residues 2690–2700 (GWRPPALPAPV) and 2710–2719 (PDQPPTPESA). Positions 2734-2743 (ASARGAFPAP) are enriched in low complexity. Pro residues-rich tracts occupy residues 2744 to 2753 (TLAPIPPPPA) and 2775 to 2785 (SPTPPRGPAAG). Low complexity-rich tracts occupy residues 2786–2807 (PPRR…SLPS) and 2814–2825 (HAAAVSAAAAAV). Positions 2841–2852 (SPPPLAPGPVAP) are enriched in pro residues. Positions 2853 to 2867 (SEPLCGWVVPGGPVA) are enriched in low complexity. Tandem repeats lie at residues 2891–2895 (PQPPL), 2896–2900 (PQPPL), 2901–2905 (PQPPL), 2906–2910 (PQPPL), 2911–2915 (PQPPL), 2916–2920 (PQPPL), 2921–2925 (PQPPL), 2926–2930 (PQPPL), 2931–2935 (PQPPL), 2936–2940 (PQPPL), and 2941–2945 (PQPPL). Residues 2891–2945 (PQPPLPQPPLPQPPLPQPPLPQPPLPQPPLPQPPLPQPPLPQPPLPQPPLPQPPL) are 11 X 5 AA tandem repeats of P-Q-P-P-L. Over residues 2891–2947 (PQPPLPQPPLPQPPLPQPPLPQPPLPQPPLPQPPLPQPPLPQPPLPQPPLPQPPLPP) the composition is skewed to pro residues. 2 stretches are compositionally biased toward polar residues: residues 2950-2959 (RTLTPQSRDS) and 2965-2974 (SPTHTNTHLP). Positions 3006–3020 (SDDEHSDADSLRFSD) are enriched in basic and acidic residues. Over residues 3029 to 3045 (PLPPEPHLPPADEPPGP) the composition is skewed to pro residues.

Belongs to the herpesviridae large tegument protein family. As to quaternary structure, interacts with host CUL1 and CUL4A; these interactions inhibit the E3 ligase activity of cullins. Interacts with inner tegument protein. Interacts with capsid vertex specific component CVC2. Interacts with the major capsid protein/MCP. In terms of processing, proteolytically processed, possibly into several polypeptides. Enzymatic activity is only detectable following cleavage of the UL36 protein, which occurs late during viral replication.

It localises to the virion tegument. Its subcellular location is the host cytoplasm. The protein resides in the host nucleus. It catalyses the reaction Thiol-dependent hydrolysis of ester, thioester, amide, peptide and isopeptide bonds formed by the C-terminal Gly of ubiquitin (a 76-residue protein attached to proteins as an intracellular targeting signal).. In terms of biological role, large tegument protein that plays multiple roles in the viral cycle. During viral entry, remains associated with the capsid while most of the tegument is detached and participates in the capsid transport toward the host nucleus. Plays a role in the routing of the capsid at the nuclear pore complex and subsequent uncoating. Within the host nucleus, acts as a deneddylase and promotes the degradation of nuclear CRLs (cullin-RING ubiquitin ligases) and thereby stabilizes nuclear CRL substrates, while cytoplasmic CRLs remain unaffected. These modifications prevent host cell cycle S-phase progression and create a favorable environment allowing efficient viral genome replication. Participates later in the secondary envelopment of capsids. Indeed, plays a linker role for the association of the outer viral tegument to the capsids together with the inner tegument protein. This Human herpesvirus 2 (strain HG52) (HHV-2) protein is Large tegument protein deneddylase.